The sequence spans 436 residues: Origin recognition complex subunit 4 (436 aa).

Residue lysine 7 is modified to N6-methyllysine. 67-74 (GPRGSGKT) serves as a coordination point for ATP.

It belongs to the ORC4 family. Component of ORC, a complex composed of at least 6 subunits: ORC1, ORC2, ORC3, ORC4, ORC5 and ORC6. ORC is regulated in a cell-cycle dependent manner. It is sequentially assembled at the exit from anaphase of mitosis and disassembled as cells enter S phase. Interacts with DBF4. Interacts with POLQ.

It is found in the nucleus. Functionally, component of the origin recognition complex (ORC) that binds origins of replication. DNA-binding is ATP-dependent. The specific DNA sequences that define origins of replication have not been identified yet. ORC is required to assemble the pre-replication complex necessary to initiate DNA replication. Binds histone H3 and H4 trimethylation marks H3K9me3, H3K27me3 and H4K20me3. The chain is Origin recognition complex subunit 4 (ORC4) from Homo sapiens (Human).